Here is a 534-residue protein sequence, read N- to C-terminus: Neryl diphosphate diphosphatase, chloroplastic (534 aa).

D272, D276, D416, and E424 together coordinate Mg(2+). Positions 272-276 match the DDXXD motif motif; it reads DDIFD.

This sequence belongs to the terpene synthase family. Requires Mg(2+) as cofactor.

It localises to the plastid. Its subcellular location is the chloroplast. It carries out the reaction neryl diphosphate + H2O = nerol + diphosphate. Its pathway is secondary metabolite biosynthesis; terpenoid biosynthesis. Monoterpene synthase that catalyzes the hydrolysis of neryl diphosphate (NPP) to form nerol and diphosphate. Is specific for NPP and has no hydrolase activity toward geranyl diphosphate (GPP) or farnesyl diphosphate (FPP). The monoterpene nerol may have an insect repellent effect for the plant leaves. The protein is Neryl diphosphate diphosphatase, chloroplastic of Glycine max (Soybean).